The following is a 1030-amino-acid chain: FACT complex subunit spt-16 (1030 aa).

Residues 424–445 (RLKSNVIKFKEEQENREAEKDN) adopt a coiled-coil conformation. Basic and acidic residues-rich tracts occupy residues 435–449 (EQENREAEKDNDQKK) and 464–477 (TRNKTTNEELRKER). Disordered regions lie at residues 435 to 477 (EQEN…RKER) and 491 to 514 (ARLSKQGGGTDEKKSKKSNVSYKT). A coiled-coil region spans residues 623–645 (RLIKEMQKRFKTEEAEEREKEGA). A disordered region spans residues 927-1030 (VESDNEEAMD…KSGPSHKRRK (104 aa)). 2 stretches are compositionally biased toward acidic residues: residues 929 to 951 (SDNEEAMDDSDDSDAYDPEEEDA) and 958 to 983 (ESDEDESEGEETESDDDDEGSLDSDE). A coiled-coil region spans residues 987 to 1007 (KDWSDLEEEAANADKRREVEE). The segment covering 998 to 1014 (NADKRREVEEPSRDRDR) has biased composition (basic and acidic residues). A compositionally biased stretch (basic residues) spans 1015–1030 (KRPHSSKSGPSHKRRK).

This sequence belongs to the peptidase M24 family. SPT16 subfamily. As to quaternary structure, component of the FACT complex, a stable heterodimer of spt-16 and hmg-3 or hmg-4. Expressed in the germline and somatic cells.

The protein resides in the nucleus. The protein localises to the chromosome. In terms of biological role, component of the FACT complex, a general chromatin factor that acts to reorganize nucleosomes. The FACT complex is involved in multiple processes that require DNA as a template such as mRNA elongation, DNA replication and DNA repair. During transcription elongation the FACT complex acts as a histone chaperone that both destabilizes and restores nucleosomal structure. It facilitates the passage of RNA polymerase II and transcription by promoting the dissociation of one histone H2A-H2B dimer from the nucleosome, then subsequently promotes the reestablishment of the nucleosome following the passage of RNA polymerase II. In embryos, promotes cell cycle progression and chromosomal segregation. Plays a role in the development of the anterior pharynx during embryonic development. The protein is FACT complex subunit spt-16 of Caenorhabditis elegans.